The sequence spans 603 residues: Glutamyl-tRNA(Gln) amidotransferase subunit E (603 aa).

The protein belongs to the GatB/GatE family. GatE subfamily. As to quaternary structure, heterodimer of GatD and GatE.

The enzyme catalyses L-glutamyl-tRNA(Gln) + L-glutamine + ATP + H2O = L-glutaminyl-tRNA(Gln) + L-glutamate + ADP + phosphate + H(+). Allows the formation of correctly charged Gln-tRNA(Gln) through the transamidation of misacylated Glu-tRNA(Gln) in organisms which lack glutaminyl-tRNA synthetase. The reaction takes place in the presence of glutamine and ATP through an activated gamma-phospho-Glu-tRNA(Gln). The GatDE system is specific for glutamate and does not act on aspartate. The sequence is that of Glutamyl-tRNA(Gln) amidotransferase subunit E from Thermoplasma acidophilum (strain ATCC 25905 / DSM 1728 / JCM 9062 / NBRC 15155 / AMRC-C165).